The primary structure comprises 297 residues: ATP phosphoribosyltransferase (297 aa).

Belongs to the ATP phosphoribosyltransferase family.

It localises to the cytoplasm. The enzyme catalyses 1-(5-phospho-beta-D-ribosyl)-ATP + diphosphate = 5-phospho-alpha-D-ribose 1-diphosphate + ATP. It participates in amino-acid biosynthesis; L-histidine biosynthesis; L-histidine from 5-phospho-alpha-D-ribose 1-diphosphate: step 1/9. Functionally, catalyzes the condensation of ATP and 5-phosphoribose 1-diphosphate to form N'-(5'-phosphoribosyl)-ATP (PR-ATP). Has a crucial role in the pathway because the rate of histidine biosynthesis seems to be controlled primarily by regulation of the enzymatic activity. The polypeptide is ATP phosphoribosyltransferase (HIS1) (Kluyveromyces lactis (strain ATCC 8585 / CBS 2359 / DSM 70799 / NBRC 1267 / NRRL Y-1140 / WM37) (Yeast)).